The primary structure comprises 199 residues: Superoxide dismutase [Mn/Fe] (199 aa).

Positions 27, 81, 161, and 165 each coordinate Fe(3+). Mn(2+)-binding residues include histidine 27, histidine 81, aspartate 161, and histidine 165.

This sequence belongs to the iron/manganese superoxide dismutase family. Homodimer. Requires Mn(2+) as cofactor. It depends on Fe(3+) as a cofactor.

It carries out the reaction 2 superoxide + 2 H(+) = H2O2 + O2. Functionally, destroys superoxide anion radicals which are normally produced within the cells and which are toxic to biological systems. Catalyzes the dismutation of superoxide anion radicals into O2 and H2O2 by successive reduction and oxidation of the transition metal ion at the active site. The protein is Superoxide dismutase [Mn/Fe] (sodA) of Staphylococcus saprophyticus subsp. saprophyticus (strain ATCC 15305 / DSM 20229 / NCIMB 8711 / NCTC 7292 / S-41).